The chain runs to 452 residues: Phosphoglucosamine mutase (452 aa).

The active-site Phosphoserine intermediate is the S108. Positions 108, 247, 249, and 251 each coordinate Mg(2+). At S108 the chain carries Phosphoserine.

It belongs to the phosphohexose mutase family. Mg(2+) is required as a cofactor. Post-translationally, activated by phosphorylation.

It catalyses the reaction alpha-D-glucosamine 1-phosphate = D-glucosamine 6-phosphate. Catalyzes the conversion of glucosamine-6-phosphate to glucosamine-1-phosphate. In Paraburkholderia phytofirmans (strain DSM 17436 / LMG 22146 / PsJN) (Burkholderia phytofirmans), this protein is Phosphoglucosamine mutase.